Reading from the N-terminus, the 315-residue chain is Methionyl-tRNA formyltransferase (315 aa).

Residue Ser-113–Pro-116 coordinates (6S)-5,6,7,8-tetrahydrofolate.

The protein belongs to the Fmt family.

It carries out the reaction L-methionyl-tRNA(fMet) + (6R)-10-formyltetrahydrofolate = N-formyl-L-methionyl-tRNA(fMet) + (6S)-5,6,7,8-tetrahydrofolate + H(+). Attaches a formyl group to the free amino group of methionyl-tRNA(fMet). The formyl group appears to play a dual role in the initiator identity of N-formylmethionyl-tRNA by promoting its recognition by IF2 and preventing the misappropriation of this tRNA by the elongation apparatus. The polypeptide is Methionyl-tRNA formyltransferase (Shigella flexneri serotype 5b (strain 8401)).